The following is a 395-amino-acid chain: Putative 8-amino-7-oxononanoate synthase (395 aa).

Substrate is bound at residue R23. A pyridoxal 5'-phosphate-binding site is contributed by 110–111 (GY). H135 provides a ligand contact to substrate. Pyridoxal 5'-phosphate contacts are provided by residues S182, 207 to 210 (DEAH), and 239 to 242 (TFSK). K242 is subject to N6-(pyridoxal phosphate)lysine. T356 contacts substrate.

This sequence belongs to the class-II pyridoxal-phosphate-dependent aminotransferase family. BioF subfamily. As to quaternary structure, homodimer. Requires pyridoxal 5'-phosphate as cofactor.

The catalysed reaction is 6-carboxyhexanoyl-[ACP] + L-alanine + H(+) = (8S)-8-amino-7-oxononanoate + holo-[ACP] + CO2. It functions in the pathway cofactor biosynthesis; biotin biosynthesis. Its function is as follows. Catalyzes the decarboxylative condensation of pimeloyl-[acyl-carrier protein] and L-alanine to produce 8-amino-7-oxononanoate (AON), [acyl-carrier protein], and carbon dioxide. The polypeptide is Putative 8-amino-7-oxononanoate synthase (bioF) (Bacillus mycoides (strain KBAB4) (Bacillus weihenstephanensis)).